The sequence spans 370 residues: 3-dehydroquinate synthase (370 aa).

NAD(+)-binding positions include 112-116 (GVVGD), 136-137 (TS), K149, K158, and 176-179 (TLRT). Positions 191, 254, and 276 each coordinate Zn(2+).

Belongs to the sugar phosphate cyclases superfamily. Dehydroquinate synthase family. Co(2+) is required as a cofactor. It depends on Zn(2+) as a cofactor. The cofactor is NAD(+).

The protein localises to the cytoplasm. It carries out the reaction 7-phospho-2-dehydro-3-deoxy-D-arabino-heptonate = 3-dehydroquinate + phosphate. Its pathway is metabolic intermediate biosynthesis; chorismate biosynthesis; chorismate from D-erythrose 4-phosphate and phosphoenolpyruvate: step 2/7. In terms of biological role, catalyzes the conversion of 3-deoxy-D-arabino-heptulosonate 7-phosphate (DAHP) to dehydroquinate (DHQ). The protein is 3-dehydroquinate synthase of Xanthomonas oryzae pv. oryzae (strain PXO99A).